We begin with the raw amino-acid sequence, 647 residues long: Protein INVOLVED IN DE NOVO 2 (647 aa).

2 disordered regions span residues 1-20 (MGST…SESE) and 101-123 (SASE…DCDH). Residues 9-20 (SDDEDSDISESE) are compositionally biased toward acidic residues. A coiled-coil region spans residues 253–508 (IAELTEEEAR…NIMKEWNTNI (256 aa)).

In terms of assembly, interacts with FMD1/IDNL1. Forms a complex with FMD1/IDNL1 and FMD2/INDL2. Can form homodimers. Interacts with MORC6.

Forms a complex with FDM1/IDNL1 and FDM2/IDNL2 that is required for RNA-directed DNA methylation (RdDM) and that functions at a downstream step of the RdDM pathway and downstream of small interfering RNA (siRNA) formation. Required for de novo DNA methylation, siRNA accumulation and siRNA-mediated maintenance methylation. Required for several post-transcriptional gene silencing pathways. Binds double-stranded RNAs (dsRNAs) with 5'-overhangs through its XS domain. Binds long non-coding RNA (lncRNA) in an AGO4-dependent manner and associates with DRM2, resulting in DNA methylation of RdDM target loci. Mediates the silencing of a subset of MORC6 target loci. The chain is Protein INVOLVED IN DE NOVO 2 from Arabidopsis thaliana (Mouse-ear cress).